The sequence spans 299 residues: UBX domain-containing protein 1 (299 aa).

Disordered regions lie at residues 39–61, 127–176, and 191–218; these read AGVPMETDAPAQAAPGAADSGAP, KAKL…NEDE, and EARKAKASGQPVPEAKPAPSAAPVAPPK. The segment covering 46–61 has biased composition (low complexity); that stretch reads DAPAQAAPGAADSGAP. Residues 111-179 adopt a coiled-coil conformation; sequence AKVLEIREKI…REKNEDEIAR (69 aa). The span at 128 to 176 shows a compositional bias: basic and acidic residues; the sequence is AKLEAEENREKEKKRREDGKAMISHKEAARDREIREAAQDRRREKNEDE. The span at 201 to 213 shows a compositional bias: low complexity; it reads PVPEAKPAPSAAP. Residues 218–295 form the UBX domain; the sequence is KDYSTTTLQF…NLVPSANVIL (78 aa).

In terms of assembly, interacts with cdc-48.1 (via N-terminus) and cdc-48.2 (via N-terminus) in vitro; the interaction with cdc-48.1 is not detected in vivo. In terms of tissue distribution, expressed in the germline (at protein level). Expressed in spermatocytes but not in mature sperm (at protein level). Ubiquitously expressed. Predominantly expressed in the spermatheca.

The protein resides in the cytoplasm. It is found in the perinuclear region. Its function is as follows. Ubiquitin-binding protein which acts as an adapter for ATPase cdc-48.1 and/or cdc-48.2, conferring substrate specificity. Together with ubxn-2 and ubxn-3, plays a role in hermaphrodite spermatogenesis probably by promoting the degradation of sex determination terminal factor tra-1. This Caenorhabditis elegans protein is UBX domain-containing protein 1.